We begin with the raw amino-acid sequence, 103 residues long: Large ribosomal subunit protein bL21 (103 aa).

Belongs to the bacterial ribosomal protein bL21 family. As to quaternary structure, part of the 50S ribosomal subunit. Contacts protein L20.

This protein binds to 23S rRNA in the presence of protein L20. This chain is Large ribosomal subunit protein bL21, found in Vibrio atlanticus (strain LGP32) (Vibrio splendidus (strain Mel32)).